The following is a 156-amino-acid chain: 6,7-dimethyl-8-ribityllumazine synthase (156 aa).

Residues Phe-22, 57–59 (AVE), and 81–83 (TVI) contribute to the 5-amino-6-(D-ribitylamino)uracil site. 86–87 (GT) lines the (2S)-2-hydroxy-3-oxobutyl phosphate pocket. The active-site Proton donor is His-89. 5-amino-6-(D-ribitylamino)uracil is bound at residue Phe-114. Arg-128 is a binding site for (2S)-2-hydroxy-3-oxobutyl phosphate.

Belongs to the DMRL synthase family. In terms of assembly, forms an icosahedral capsid composed of 60 subunits, arranged as a dodecamer of pentamers.

It carries out the reaction (2S)-2-hydroxy-3-oxobutyl phosphate + 5-amino-6-(D-ribitylamino)uracil = 6,7-dimethyl-8-(1-D-ribityl)lumazine + phosphate + 2 H2O + H(+). It functions in the pathway cofactor biosynthesis; riboflavin biosynthesis; riboflavin from 2-hydroxy-3-oxobutyl phosphate and 5-amino-6-(D-ribitylamino)uracil: step 1/2. Functionally, catalyzes the formation of 6,7-dimethyl-8-ribityllumazine by condensation of 5-amino-6-(D-ribitylamino)uracil with 3,4-dihydroxy-2-butanone 4-phosphate. This is the penultimate step in the biosynthesis of riboflavin. In Vibrio campbellii (strain ATCC BAA-1116), this protein is 6,7-dimethyl-8-ribityllumazine synthase.